We begin with the raw amino-acid sequence, 399 residues long: Argininosuccinate synthase (399 aa).

Residue 9 to 17 (AYSGGLDTS) participates in ATP binding. Tyr88 contacts L-citrulline. Gly118 provides a ligand contact to ATP. 3 residues coordinate L-aspartate: Thr120, Asn124, and Asp125. An L-citrulline-binding site is contributed by Asn124. Residues Arg128, Ser176, Glu261, and Tyr273 each contribute to the L-citrulline site.

Belongs to the argininosuccinate synthase family. Type 1 subfamily. As to quaternary structure, homotetramer.

It localises to the cytoplasm. The catalysed reaction is L-citrulline + L-aspartate + ATP = 2-(N(omega)-L-arginino)succinate + AMP + diphosphate + H(+). The protein operates within amino-acid biosynthesis; L-arginine biosynthesis; L-arginine from L-ornithine and carbamoyl phosphate: step 2/3. This chain is Argininosuccinate synthase, found in Mycobacterium leprae (strain TN).